Reading from the N-terminus, the 368-residue chain is DNA replication and repair protein RecF (368 aa).

Residue 30–37 (GNNAQGKT) participates in ATP binding.

Belongs to the RecF family.

Its subcellular location is the cytoplasm. In terms of biological role, the RecF protein is involved in DNA metabolism; it is required for DNA replication and normal SOS inducibility. RecF binds preferentially to single-stranded, linear DNA. It also seems to bind ATP. This chain is DNA replication and repair protein RecF, found in Streptococcus pyogenes serotype M12 (strain MGAS2096).